Here is a 65-residue protein sequence, read N- to C-terminus: Chymotrypsin/elastase isoinhibitors 2 to 5 (65 aa).

5 cysteine pairs are disulfide-bonded: Cys4–Cys37, Cys13–Cys32, Cys16–Cys28, Cys20–Cys59, and Cys39–Cys53. The TIL domain maps to 4–59 (CGKNEVWTECTGCELKCGQDEKTPCALMCRPPSCECTPGRGMRRTHDGKCVPVSEC).

This sequence belongs to the serine protease inhibitor-like (TIL domain-containing) family.

The protein localises to the secreted. In terms of biological role, defends the organism against the host's proteinases. This Ascaris suum (Pig roundworm) protein is Chymotrypsin/elastase isoinhibitors 2 to 5.